The chain runs to 273 residues: MDFLIVLKALMMGLVEGFTEFLPISSTGHLIVFGNLIDFHSNHKVFEITIQLGAVLAVVFEYRQRFSNVLHGVGKDRKANRFVLNLAIAFIPAAVMGLLFGKQIKEYLFNPLSVAVMLVLGGFFILWVEKRQSRAEPKIVDVDALRPIDALMIGVAQVFALVPGTSRSGSTIMGGMLWGIERKTATEFSFFLAVPMMVAATAYDVLKHYRFFTLHDVGLILIGFVAAFVSGLVAVKALLRFVSKKNYIPFAYYRIVFGIAIIILWLSGWISWE.

Transmembrane regions (helical) follow at residues 13–35 (GLVE…VFGN), 45–62 (VFEI…VFEY), 82–102 (FVLN…LFGK), 108–128 (LFNP…ILWV), 186–206 (TEFS…YDVL), 219–239 (LILI…KALL), and 250–270 (FAYY…SGWI).

This sequence belongs to the UppP family.

Its subcellular location is the cell inner membrane. It carries out the reaction di-trans,octa-cis-undecaprenyl diphosphate + H2O = di-trans,octa-cis-undecaprenyl phosphate + phosphate + H(+). Catalyzes the dephosphorylation of undecaprenyl diphosphate (UPP). Confers resistance to bacitracin. This chain is Undecaprenyl-diphosphatase, found in Neisseria meningitidis serogroup A / serotype 4A (strain DSM 15465 / Z2491).